The following is a 352-amino-acid chain: Anthranilate phosphoribosyltransferase (352 aa).

5-phospho-alpha-D-ribose 1-diphosphate is bound by residues glycine 96, 99-100, serine 104, 106-109, 124-132, and serine 136; these read GS, NIST, and KHGNRSVSS. Glycine 96 contacts anthranilate. A Mg(2+)-binding site is contributed by serine 108. Anthranilate is bound at residue asparagine 127. Anthranilate is bound at residue arginine 182. Residues aspartate 241 and glutamate 242 each coordinate Mg(2+).

Belongs to the anthranilate phosphoribosyltransferase family. As to quaternary structure, homodimer. Mg(2+) is required as a cofactor.

The enzyme catalyses N-(5-phospho-beta-D-ribosyl)anthranilate + diphosphate = 5-phospho-alpha-D-ribose 1-diphosphate + anthranilate. It participates in amino-acid biosynthesis; L-tryptophan biosynthesis; L-tryptophan from chorismate: step 2/5. Its function is as follows. Catalyzes the transfer of the phosphoribosyl group of 5-phosphorylribose-1-pyrophosphate (PRPP) to anthranilate to yield N-(5'-phosphoribosyl)-anthranilate (PRA). The protein is Anthranilate phosphoribosyltransferase of Syntrophotalea carbinolica (strain DSM 2380 / NBRC 103641 / GraBd1) (Pelobacter carbinolicus).